The sequence spans 288 residues: ATP synthase gamma chain (288 aa).

Belongs to the ATPase gamma chain family. As to quaternary structure, F-type ATPases have 2 components, CF(1) - the catalytic core - and CF(0) - the membrane proton channel. CF(1) has five subunits: alpha(3), beta(3), gamma(1), delta(1), epsilon(1). CF(0) has three main subunits: a, b and c.

It is found in the cell membrane. Functionally, produces ATP from ADP in the presence of a proton gradient across the membrane. The gamma chain is believed to be important in regulating ATPase activity and the flow of protons through the CF(0) complex. The chain is ATP synthase gamma chain from Staphylococcus saprophyticus subsp. saprophyticus (strain ATCC 15305 / DSM 20229 / NCIMB 8711 / NCTC 7292 / S-41).